The chain runs to 439 residues: MRLATDQLGRPPQRVAVLSVHTSPLAQPGTGDAGGMNVYVLQSALHMARRGVEVEIFTRATTSADPPVVRVAPGVLVRNVVAGPFEGLDKYDLPTQLCAFTAGVLRAEATHEPGYYDIVHSHYWLSGQVGWLARDRWAVPLVHTAHTLAAVKNAALAEGDSPEPPLRAVGEQQVVDEADRLIVNTELEAEQLVSLHNADPSRIDVVHPGVDLDTFTPGDRAAARAALGLDPRETVVAFVGRIQPLKAPDILLRAAAKLPDVRVLVAGGPSGSGLAAPDNLVALADELGISERVTFLPPQSREDLVRVYRAADLVAVPSYSESFGLVAVEAQACGTPVVAAAVGGLPVAVRDGVTGALVDGHDVGDWAHTIDSLLSRGPATMRRAAVEHAATFSWAHTVDDLLASYGRAISDYRDRHPHADETLSRRTARRFSRRRGVRA.

A 1D-myo-inositol 3-phosphate-binding site is contributed by His-21. UDP-N-acetyl-alpha-D-glucosamine contacts are provided by residues 27-28 (QP) and Gly-35. 1D-myo-inositol 3-phosphate-binding positions include 32 to 37 (DAGGMN), Lys-90, Tyr-123, Thr-147, and Arg-167. UDP-N-acetyl-alpha-D-glucosamine-binding residues include Arg-241, Lys-246, and Gln-299. Residues Tyr-308, Arg-309, and Ala-311 each coordinate Mg(2+). The UDP-N-acetyl-alpha-D-glucosamine site is built by Glu-321 and Glu-329. Thr-335 contributes to the Mg(2+) binding site.

This sequence belongs to the glycosyltransferase group 1 family. MshA subfamily. In terms of assembly, homodimer.

The catalysed reaction is 1D-myo-inositol 3-phosphate + UDP-N-acetyl-alpha-D-glucosamine = 1D-myo-inositol 2-acetamido-2-deoxy-alpha-D-glucopyranoside 3-phosphate + UDP + H(+). Catalyzes the transfer of a N-acetyl-glucosamine moiety to 1D-myo-inositol 3-phosphate to produce 1D-myo-inositol 2-acetamido-2-deoxy-glucopyranoside 3-phosphate in the mycothiol biosynthesis pathway. The sequence is that of D-inositol 3-phosphate glycosyltransferase from Mycobacterium sp. (strain KMS).